We begin with the raw amino-acid sequence, 379 residues long: Cyclin-dependent kinase-like 4 (379 aa).

Residues 4–286 (YEKLAKTGEG…CSQLLESSYF (283 aa)) enclose the Protein kinase domain. ATP-binding positions include 10 to 18 (TGEGSYGVV) and Lys33. The short motif at 45 to 51 (KKIALRE) is the [NKR]KIAxRE element. Catalysis depends on Asp126, which acts as the Proton acceptor.

Belongs to the protein kinase superfamily. CMGC Ser/Thr protein kinase family. CDC2/CDKX subfamily.

The protein resides in the cytoplasm. The catalysed reaction is L-seryl-[protein] + ATP = O-phospho-L-seryl-[protein] + ADP + H(+). It carries out the reaction L-threonyl-[protein] + ATP = O-phospho-L-threonyl-[protein] + ADP + H(+). The chain is Cyclin-dependent kinase-like 4 (CDKL4) from Homo sapiens (Human).